The following is a 288-amino-acid chain: Bifunctional protein FolD (288 aa).

NADP(+)-binding positions include 166 to 168 and Ile232; that span reads GAS.

This sequence belongs to the tetrahydrofolate dehydrogenase/cyclohydrolase family. As to quaternary structure, homodimer.

The enzyme catalyses (6R)-5,10-methylene-5,6,7,8-tetrahydrofolate + NADP(+) = (6R)-5,10-methenyltetrahydrofolate + NADPH. The catalysed reaction is (6R)-5,10-methenyltetrahydrofolate + H2O = (6R)-10-formyltetrahydrofolate + H(+). It functions in the pathway one-carbon metabolism; tetrahydrofolate interconversion. Its function is as follows. Catalyzes the oxidation of 5,10-methylenetetrahydrofolate to 5,10-methenyltetrahydrofolate and then the hydrolysis of 5,10-methenyltetrahydrofolate to 10-formyltetrahydrofolate. The sequence is that of Bifunctional protein FolD from Escherichia coli (strain UTI89 / UPEC).